A 780-amino-acid chain; its full sequence is MDVETVQAGPALAAHLQLQASPKPQVKKYYFKKKTSSSHSRNGKDDVNHDSTIQPRSPLSRQSLTFDAIPTYHAGAFYEIDHDKLPPKSPIHLKSIRVVKVSECTNLDITVKFPSLQALRSFFSSYPAPGTGPELDERFVMSSNHAARILRRRVTEEELEGEVQQDSFWLIKPRLYDFAAPQQVPSRTLCLPPPPAPPAATLGLTADSCLLTTLKCDGAGWGMRRRVRYIGRHRDEAPKEASVDGYDTESSVREVQQPPATQEVKRSERNCKRKREAEASSKDNNGDEGKKNNKVQGASKKISKKAKKRTVESKDGDPRHGKDRWSAERYAAAEKSLLNIMRSRDARFGAPVMRQVLREEARKHIGDTGLLDHLLKHMAGRVPEGSVHRFRRRHNADGAMEYWLEPAELAEVRKQAGVSDPYWVPPPGWKPGDDVSLVAGDILVKRQVEELTEEVNGVKRQMEQLLCKDDGDFGAERDYSSLKEKYQRAVRANEKLEKQVLCLKDMCENVVQMNGELKKEVSAFKEKYEHIADKNDKLEEQVTYLSSSFLSFKDQLVVALKLELAPSEAVPRTALFVASGEQMTGTVIQGGQDRAERKSSFRVCKPQGKFLLPSMASGMTIGRGASSTCPAAATPGPGIPRSTSFPSMPGLPRSSRGPVEVVAAASGLDEHVMFGAHFSTPPSASSTNDAAKLQLSLPSPRSPLQPQKLFDTVTAAASGFSPQKLMHFSGLTRRDVDTSSSSSGACGSGLLEGKRVLFDADAGGISAVGTELALATPSYC.

Disordered regions lie at residues 32–60 (KKKT…SPLS) and 237–327 (APKE…RWSA). Residues 50–60 (DSTIQPRSPLS) are compositionally biased toward polar residues. 2 stretches are compositionally biased toward basic and acidic residues: residues 263–291 (EVKR…EGKK) and 309–327 (RTVE…RWSA). Residues 448–547 (VEELTEEVNG…LEEQVTYLSS (100 aa)) are a coiled coil.

The protein resides in the nucleus. It localises to the chromosome. Plays a fundamental role in building the proper chromosome structure at the beginning of meiosis in male meiocytes. Required for the transition from leptotene to zygotene in meiocytes. Required for homologous chromosome pairing, and initiation and progression of meiotic recombination. Regulates meiocyte cytoskeleton organization. In Zea mays (Maize), this protein is Protein AMEIOTIC 1.